A 287-amino-acid polypeptide reads, in one-letter code: Lys-63-specific deubiquitinase (287 aa).

An MPN domain is found at 33–176; the sequence is VHLESDAFLV…YTCFQSVQAQ (144 aa). Zn(2+)-binding residues include histidine 119, histidine 121, and aspartate 132. Positions 119–132 match the JAMM motif motif; it reads HSHPHITVWPSHVD. A coiled-coil region spans residues 256-283; the sequence is LQWLEDRLEQNKQSIITLQKEKELLTQE.

Belongs to the peptidase M67A family. BRCC36 subfamily. Monomer. Homodimer. Component of the BRISC complex, at least composed of abraxas2, brcc3, babam1 and babam2. Interacts with abraxas2; the interaction is direct and may form a heterotetramer. Component of the BRCA1-A complex. Both the BRCA1-A complex and the BRISC complex bind polyubiquitin. Requires Zn(2+) as cofactor.

The protein resides in the nucleus. The protein localises to the cytoplasm. Its subcellular location is the cytoskeleton. It is found in the spindle pole. Metalloprotease that specifically cleaves 'Lys-63'-linked polyubiquitin chains, leaving the last ubiquitin chain attached to its substrates. Catalytic subunit of the BRISC complex, a multiprotein complex that specifically cleaves 'Lys-63'-linked ubiquitin in various substrates; brcc3 does not have activity by itself, but needs to be associated into a higher-order assembly, for minimal in vitro activity. The polypeptide is Lys-63-specific deubiquitinase (Danio rerio (Zebrafish)).